Reading from the N-terminus, the 31-residue chain is Cytochrome b6-f complex subunit 6 (31 aa).

Residues 4–24 (ITSYFGFLLAALTITSALLIG) form a helical membrane-spanning segment.

It belongs to the PetL family. The 4 large subunits of the cytochrome b6-f complex are cytochrome b6, subunit IV (17 kDa polypeptide, PetD), cytochrome f and the Rieske protein, while the 4 small subunits are PetG, PetL, PetM and PetN. The complex functions as a dimer.

It is found in the plastid. It localises to the chloroplast thylakoid membrane. In terms of biological role, component of the cytochrome b6-f complex, which mediates electron transfer between photosystem II (PSII) and photosystem I (PSI), cyclic electron flow around PSI, and state transitions. PetL is important for photoautotrophic growth as well as for electron transfer efficiency and stability of the cytochrome b6-f complex. This Magnolia grandiflora (Southern magnolia) protein is Cytochrome b6-f complex subunit 6.